A 464-amino-acid polypeptide reads, in one-letter code: Glutamate--tRNA ligase (464 aa).

The 'HIGH' region motif lies at 9–19 (PSPTGYLHIGG). Positions 242–246 (KISKR) match the 'KMSKS' region motif. Lys-245 serves as a coordination point for ATP.

The protein belongs to the class-I aminoacyl-tRNA synthetase family. Glutamate--tRNA ligase type 1 subfamily. As to quaternary structure, monomer.

Its subcellular location is the cytoplasm. It catalyses the reaction tRNA(Glu) + L-glutamate + ATP = L-glutamyl-tRNA(Glu) + AMP + diphosphate. Its function is as follows. Catalyzes the attachment of glutamate to tRNA(Glu) in a two-step reaction: glutamate is first activated by ATP to form Glu-AMP and then transferred to the acceptor end of tRNA(Glu). The sequence is that of Glutamate--tRNA ligase from Neisseria meningitidis serogroup C (strain 053442).